The chain runs to 100 residues: Small ubiquitin-related modifier 1 (100 aa).

The Ubiquitin-like domain occupies 19-96; sequence EYIKLKVIGQ…IEVYQEQTGG (78 aa). Gly-96 participates in a covalent cross-link: Glycyl lysine isopeptide (Gly-Lys) (interchain with K-? in acceptor proteins). A propeptide spanning residues 97-100 is cleaved from the precursor; the sequence is CRND.

It belongs to the ubiquitin family. SUMO subfamily. As to quaternary structure, interacts with sae2, ube2i, ranbp2, pias1 and pias2. Covalently attached to a number of proteins. Cleavage of precursor form by a sentrin-specific protease is necessary for function.

Its subcellular location is the nucleus membrane. It localises to the nucleus speckle. The protein resides in the cytoplasm. The protein localises to the nucleus. It is found in the PML body. Its subcellular location is the cell membrane. Functionally, ubiquitin-like protein that can be covalently attached to proteins as a monomer or a lysine-linked polymer. Covalent attachment via an isopeptide bond to its substrates requires prior activation by the E1 complex sae1-sae2 and linkage to the E2 enzyme ube2i. This post-translational modification on lysine residues of proteins plays a crucial role in a number of cellular processes such as nuclear transport, DNA replication and repair, mitosis and signal transduction. Polymeric sumo1 chains are also susceptible to polyubiquitination which functions as a signal for proteasomal degradation of modified proteins. This Danio rerio (Zebrafish) protein is Small ubiquitin-related modifier 1 (sumo1).